Here is a 916-residue protein sequence, read N- to C-terminus: RNA-directed DNA polymerase from mobile element jockey (916 aa).

In terms of domain architecture, Reverse transcriptase spans 483-757 (SILRVGYFPK…HEYKYLGVIL (275 aa)). Positions 890-916 (RSASPRSRVRRRLKRHHPQDLLDRALT) are disordered. Residues 896–906 (SRVRRRLKRHH) show a composition bias toward basic residues. Residues 907–916 (PQDLLDRALT) show a composition bias toward basic and acidic residues.

The cofactor is Mg(2+). It depends on Mn(2+) as a cofactor.

The enzyme catalyses DNA(n) + a 2'-deoxyribonucleoside 5'-triphosphate = DNA(n+1) + diphosphate. With respect to regulation, inactivated by sulphydryl reagent. In Drosophila funebris (Fruit fly), this protein is RNA-directed DNA polymerase from mobile element jockey (jockey\pol).